The sequence spans 122 residues: Large ribosomal subunit protein bL12 (122 aa).

This sequence belongs to the bacterial ribosomal protein bL12 family. As to quaternary structure, homodimer. Part of the ribosomal stalk of the 50S ribosomal subunit. Forms a multimeric L10(L12)X complex, where L10 forms an elongated spine to which 2 to 4 L12 dimers bind in a sequential fashion. Binds GTP-bound translation factors.

Functionally, forms part of the ribosomal stalk which helps the ribosome interact with GTP-bound translation factors. Is thus essential for accurate translation. The sequence is that of Large ribosomal subunit protein bL12 from Yersinia enterocolitica serotype O:8 / biotype 1B (strain NCTC 13174 / 8081).